A 225-amino-acid chain; its full sequence is Interleukin-6 (225 aa).

The signal sequence occupies residues 1 to 24; that stretch reads MPSRLNVFWLCAAALAALLRCAPA. Residue asparagine 98 is glycosylated (N-linked (GlcNAc...) asparagine).

This sequence belongs to the IL-6 superfamily. As to quaternary structure, component of a hexamer of two molecules each of IL6, IL6R and IL6ST; first binds to IL6R to associate with the signaling subunit IL6ST. In terms of tissue distribution, expressed in white muscle, skin, spleen, anterior intestine and stomach. Not expressed in brain, gill, head kidney, posterior intestine and adipose tissue.

It is found in the secreted. Its function is as follows. Cytokine with a wide variety of biological functions in immunity, tissue regeneration, and metabolism. Binds to IL6R, then the complex associates to the signaling subunit IL6ST/gp130 to trigger the intracellular IL6-signaling pathway. The interaction with the membrane-bound IL6R and IL6ST stimulates 'classic signaling', whereas the binding of IL6 and soluble IL6R to IL6ST stimulates 'trans-signaling'. Alternatively, 'cluster signaling' occurs when membrane-bound IL6:IL6R complexes on transmitter cells activate IL6ST receptors on neighboring receiver cells. This chain is Interleukin-6 (il6), found in Sparus aurata (Gilthead sea bream).